Here is a 517-residue protein sequence, read N- to C-terminus: Acetylcholine receptor subunit delta (517 aa).

An N-terminal signal peptide occupies residues 1–21 (MAGPVPTLGLLAALVVCGSWG). Residues 22-245 (LNEEQRLIQH…VTFYLIIRRK (224 aa)) are Extracellular-facing. N-linked (GlcNAc...) asparagine glycosylation is found at Asn97, Asn164, and Asn190. Cysteines 151 and 165 form a disulfide. 3 consecutive transmembrane segments (helical) span residues 246–270 (PLFYIINILVPCVLISFMINLVFYL), 278–296 (TSVAISVLLAQSVFLLLIS), and 312–333 (FLLFGMVLVTMVVVICVIVLNI). Residues 334–471 (HFRTPSTHVL…WNQVARTVDR (138 aa)) lie on the Cytoplasmic side of the membrane. Phosphotyrosine; by Tyr-kinases is present on Tyr390. Residues 472–490 (LCLFVVTPVMVVGTAWIFL) form a helical membrane-spanning segment.

The protein belongs to the ligand-gated ion channel (TC 1.A.9) family. Acetylcholine receptor (TC 1.A.9.1) subfamily. Delta/CHRND sub-subfamily. As to quaternary structure, pentamer of two alpha chains, and one each of the beta, delta, and gamma (in immature muscle) or epsilon (in mature muscle) chains. The muscle heteropentamer composed of alpha-1, beta-1, delta, epsilon subunits interacts with the alpha-conotoxin ImII.

The protein localises to the postsynaptic cell membrane. It is found in the cell membrane. It carries out the reaction K(+)(in) = K(+)(out). It catalyses the reaction Na(+)(in) = Na(+)(out). Its function is as follows. After binding acetylcholine, the AChR responds by an extensive change in conformation that affects all subunits and leads to opening of an ion-conducting channel across the plasma membrane. The sequence is that of Acetylcholine receptor subunit delta (Chrnd) from Rattus norvegicus (Rat).